The following is a 731-amino-acid chain: Two pore channel protein 2 (731 aa).

At 1–68 the chain is on the cytoplasmic side; sequence MAAEEQPLLG…RWYYSNVCQR (68 aa). A helical membrane pass occupies residues 69-89; the sequence is VLGFIIFLILILAFVEVPSSF. At 90-111 the chain is on the extracellular side; that stretch reads TKTADVRYRSQPWQPPCGLTET. Residues 112–132 traverse the membrane as a helical segment; sequence IEAFCLLAFLVDLSVKGYLVG. At 133 to 139 the chain is on the cytoplasmic side; it reads QAQLQQN. Residues 140–160 traverse the membrane as a helical segment; that stretch reads LWLLAYFMVLVVSVVDWIVSL. The Extracellular segment spans residues 161 to 167; the sequence is SLACEEP. The chain crosses the membrane as a helical span at residues 168–188; sequence LRMRRLLRPFFLLQNSSMMKK. The tract at residues 187–191 is interaction with phosphatidylinositol 3,5-bisphosphate; sequence KKTLK. The Cytoplasmic segment spans residues 189 to 203; it reads TLKCIRWSLPEMASV. Residues 204 to 224 traverse the membrane as a helical segment; the sequence is GLLLAIHLCLFTIIGMLLFTI. Residues 225-238 are Extracellular-facing; the sequence is GEKDEAQDQERLAY. Positions 239–263 form an intramembrane region, helical; Pore-forming; the sequence is FRNLPEALTSLLVLLTTSNNPDVMI. The Extracellular portion of the chain corresponds to 264–270; sequence PAYTQNR. The helical transmembrane segment at 271–291 threads the bilayer; that stretch reads AFALFFIVFTLIGSLFLMNLL. Residues 292 to 417 are Cytoplasmic-facing; it reads TAIIYNQFRG…TAQFIFSHHY (126 aa). A helical transmembrane segment spans residues 418 to 438; it reads FDYLGNLVALGNLLSICVFLV. Residues 439 to 449 lie on the Extracellular side of the membrane; that stretch reads LDSDLLPGERD. Residues 450-470 traverse the membrane as a helical segment; sequence DFVLGILDYIFILYYLLELLF. The Cytoplasmic portion of the chain corresponds to 471-486; it reads KVFALGLPGYLSYHSN. The chain crosses the membrane as a helical span at residues 487-507; it reads VFDGLLTIILLVSEICTLAVY. Residues 508–524 lie on the Extracellular side of the membrane; the sequence is RLPHSGWKPEQYGPLSL. The chain crosses the membrane as a helical span at residues 525 to 542; sequence WDMTRLMNTLIVFRFLRI. The Cytoplasmic portion of the chain corresponds to 543–564; it reads IPNIKPMAEVANTILGLIPNLR. Residues 565–585 traverse the membrane as a helical segment; it reads AFGGILVVAYYVFAMIGINLF. The Extracellular portion of the chain corresponds to 586-618; that stretch reads RGVIVPPGNSSLVPDNNSAVCGSFEQLGYWPNN. N-linked (GlcNAc...) asparagine glycosylation is found at Asn-594 and Asn-601. Residues 619-641 constitute an intramembrane region (helical; Pore-forming); the sequence is FDDFAAALITLWNVMVVNNWQVI. Residues 642-656 are Extracellular-facing; the sequence is LEAYKRYAGPWSMVY. A helical transmembrane segment spans residues 657–677; the sequence is FVLWWLVSSVIWINLFLALLL. Over 678-731 the chain is Cytoplasmic; it reads ENFLHRWDPQGHKQLLVGTKQMSVELMFRDILEEPKEEELMEKLHKHPHLHLCR.

The protein belongs to the calcium channel alpha-1 subunit (TC 1.A.1.11) family. Two pore calcium channel subfamily. As to quaternary structure, homodimer. Interacts with LRRK2. Interacts with HAX1. Interacts with MTOR; the interaction is required for TPCN2 ATP sensitivity. Found in a complex with LSM12, TPCN1 and TPCN2. Interacts with LSM12. Post-translationally, N-glycosylated. Widely expressed. Highly expressed in macrophages. Expressed in pigmented cells.

The protein resides in the late endosome membrane. It is found in the lysosome membrane. The protein localises to the melanosome membrane. The catalysed reaction is Ca(2+)(in) = Ca(2+)(out). The enzyme catalyses Na(+)(in) = Na(+)(out). Its activity is regulated as follows. Regulated by Mg(2+) ions, cytosolic Mg(2+) selectively inhibits outward current while lysosomal Mg(2+) modestly inhibits both the outward and inward currents. In the absence of Mg(2+), NAADP readily activates TPCN2, with properties similar to PI(3,5)P2. Na(+) current is inhibited by ATP in a MTORC-dependent manner. ATP sensitivity is independent of PI(3,5)P2. Both current elicited by PI(3,5)P2 as well as NAADP are inhibited by tetrandrine. Its function is as follows. Intracellular channel initially characterized as a non-selective Ca(2+)-permeable channel activated by NAADP (nicotinic acid adenine dinucleotide phosphate), it is also a highly-selective Na(+) channel activated directly by PI(3,5)P2 (phosphatidylinositol 3,5-bisphosphate). Localizes to the lysosomal and late endosome membranes where it regulates organellar membrane excitability, membrane trafficking, and pH homeostasis. Is associated with a plethora of physiological processes, including mTOR-dependent nutrient sensing, skin pigmentation and autophagy. Ion selectivity is not fixed but rather agonist-dependent and under defined ionic conditions, can be readily activated by both NAADP and PI(3,5)P2. As calcium channel, it increases the pH in the lysosomal lumen, as sodium channel, it promotes lysosomal exocytosis. Plays a crucial role in endolysosomal trafficking in the endolysosomal degradation pathway and is potentially involved in the homeostatic control of many macromolecules and cell metabolites. Also expressed in melanosomes of pigmented cells where mediates a Ca(2+) channel and/or PI(3,5)P2-activated melanosomal Na(+) channel to acidify pH and inhibit tyrosinase activity required for melanogenesis and pigmentation. Unlike the voltage-dependent TPCN1, TPCN2 is voltage independent and can be activated solely by PI(3,5)P2 binding. In contrast, PI(4,5)P2, PI(3,4)P2, PI(3)P and PI(5)P have no obvious effect on channel activation. In terms of biological role, (Microbial infection) During Ebola virus (EBOV) infection, controls the movement of endosomes containing virus particles and is required by EBOV to escape from the endosomal network into the cell cytoplasm. This Mus musculus (Mouse) protein is Two pore channel protein 2.